Consider the following 288-residue polypeptide: ATP synthase gamma chain (288 aa).

This sequence belongs to the ATPase gamma chain family. In terms of assembly, F-type ATPases have 2 components, CF(1) - the catalytic core - and CF(0) - the membrane proton channel. CF(1) has five subunits: alpha(3), beta(3), gamma(1), delta(1), epsilon(1). CF(0) has three main subunits: a, b and c.

The protein resides in the cell inner membrane. Its function is as follows. Produces ATP from ADP in the presence of a proton gradient across the membrane. The gamma chain is believed to be important in regulating ATPase activity and the flow of protons through the CF(0) complex. In Vibrio vulnificus (strain CMCP6), this protein is ATP synthase gamma chain.